A 348-amino-acid chain; its full sequence is Dihydroorotase (348 aa).

2 residues coordinate Zn(2+): histidine 17 and histidine 19. Residues 19-21 (HLR) and asparagine 45 each bind substrate. Lysine 103, histidine 140, and histidine 178 together coordinate Zn(2+). The residue at position 103 (lysine 103) is an N6-carboxylysine. Histidine 140 provides a ligand contact to substrate. Residue leucine 223 coordinates substrate. Zn(2+) is bound at residue aspartate 251. Aspartate 251 is an active-site residue. Substrate is bound by residues histidine 255 and alanine 267.

The protein belongs to the metallo-dependent hydrolases superfamily. DHOase family. Class II DHOase subfamily. Homodimer. Requires Zn(2+) as cofactor.

The enzyme catalyses (S)-dihydroorotate + H2O = N-carbamoyl-L-aspartate + H(+). It functions in the pathway pyrimidine metabolism; UMP biosynthesis via de novo pathway; (S)-dihydroorotate from bicarbonate: step 3/3. Functionally, catalyzes the reversible cyclization of carbamoyl aspartate to dihydroorotate. The chain is Dihydroorotase from Salmonella newport (strain SL254).